The primary structure comprises 249 residues: Vacuolar iron transporter homolog 3 (249 aa).

The tract at residues 1–32 (MAMQMNSVVHVSTSPSPSPATSPPPEGKQEHG) is disordered. Residues 1-74 (MAMQMNSVVH…SGRAQWLRAA (74 aa)) lie on the Cytoplasmic side of the membrane. Pro residues predominate over residues 16 to 26 (SPSPATSPPPE). Residues 75–95 (VLGANDGLVSVASLMIGVGAV) form a helical membrane-spanning segment. The Vacuolar segment spans residues 96-102 (SESGRAM). The helical transmembrane segment at 103–123 (LVSGVAGLVAGACSMAIGEFV) threads the bilayer. Residues 124 to 166 (SVYAQYDIEVAAARRRRRQRRRRCDGDGEEEGSGRLPSPFKAA) lie on the Cytoplasmic side of the membrane. Residues 167 to 187 (AASALAFTVGALLPLLAGGFV) traverse the membrane as a helical segment. The Vacuolar portion of the chain corresponds to 188–193 (RPWAPR). The chain crosses the membrane as a helical span at residues 194–214 (VAAVCAATSAALAGFGALGAA). The Cytoplasmic portion of the chain corresponds to 215–226 (LGGASPARSAAR). A helical membrane pass occupies residues 227–247 (VLLGGWAAMAACYGVLRLFAN). Over 248 to 249 (LY) the chain is Vacuolar.

This sequence belongs to the CCC1 family.

The protein resides in the vacuole membrane. It catalyses the reaction Fe(2+)(in) = Fe(2+)(out). Functionally, probable vacuolar iron transporter that may be involved in the regulation of iron distribution throughout the plant. In Oryza sativa subsp. japonica (Rice), this protein is Vacuolar iron transporter homolog 3.